The chain runs to 155 residues: Ribosome maturation factor RimP (155 aa).

Belongs to the RimP family.

The protein localises to the cytoplasm. In terms of biological role, required for maturation of 30S ribosomal subunits. This is Ribosome maturation factor RimP from Desulforapulum autotrophicum (strain ATCC 43914 / DSM 3382 / VKM B-1955 / HRM2) (Desulfobacterium autotrophicum).